Reading from the N-terminus, the 691-residue chain is Elongation factor G (691 aa).

Positions 10–284 constitute a tr-type G domain; it reads KMYRNIGIMA…AIVKYLPSPL (275 aa). Residues 19–26, 83–87, and 137–140 each bind GTP; these read AHIDAGKT, DTPGH, and NKMD.

The protein belongs to the TRAFAC class translation factor GTPase superfamily. Classic translation factor GTPase family. EF-G/EF-2 subfamily.

The protein resides in the cytoplasm. In terms of biological role, catalyzes the GTP-dependent ribosomal translocation step during translation elongation. During this step, the ribosome changes from the pre-translocational (PRE) to the post-translocational (POST) state as the newly formed A-site-bound peptidyl-tRNA and P-site-bound deacylated tRNA move to the P and E sites, respectively. Catalyzes the coordinated movement of the two tRNA molecules, the mRNA and conformational changes in the ribosome. This chain is Elongation factor G, found in Clostridium tetani (strain Massachusetts / E88).